A 427-amino-acid chain; its full sequence is Serine--tRNA ligase (427 aa).

An L-serine-binding site is contributed by 235–237; that stretch reads TAE. Residues 266–268 and Val282 contribute to the ATP site; that span reads RRE. Glu289 is an L-serine binding site. 353-356 lines the ATP pocket; the sequence is EASS. Ser389 is a binding site for L-serine.

Belongs to the class-II aminoacyl-tRNA synthetase family. Type-1 seryl-tRNA synthetase subfamily. In terms of assembly, homodimer. The tRNA molecule binds across the dimer.

It localises to the cytoplasm. It carries out the reaction tRNA(Ser) + L-serine + ATP = L-seryl-tRNA(Ser) + AMP + diphosphate + H(+). The enzyme catalyses tRNA(Sec) + L-serine + ATP = L-seryl-tRNA(Sec) + AMP + diphosphate + H(+). It functions in the pathway aminoacyl-tRNA biosynthesis; selenocysteinyl-tRNA(Sec) biosynthesis; L-seryl-tRNA(Sec) from L-serine and tRNA(Sec): step 1/1. In terms of biological role, catalyzes the attachment of serine to tRNA(Ser). Is also able to aminoacylate tRNA(Sec) with serine, to form the misacylated tRNA L-seryl-tRNA(Sec), which will be further converted into selenocysteinyl-tRNA(Sec). The chain is Serine--tRNA ligase from Chloroherpeton thalassium (strain ATCC 35110 / GB-78).